A 405-amino-acid polypeptide reads, in one-letter code: CLIP domain-containing serine protease B8 (405 aa).

The first 24 residues, 1-24, serve as a signal peptide directing secretion; it reads MSSAVLLLLVCGCALAVLSPVAYG. 3 disulfides stabilise this stretch: Cys41/Cys94, Cys52/Cys84, and Cys58/Cys95. One can recognise a Clip domain in the interval 41–95; the sequence is CDIPNEPNPGQCMLPAECVAYGKINDVSSLSSIERFSFIKQIQCNGSDTVPYVCC. Asn85 and Asn108 each carry an N-linked (GlcNAc...) asparagine glycan. The region spanning 137–404 is the Peptidase S1 domain; the sequence is IRGGQLAEID…YLPWIKMYTG (268 aa). Cys167 and Cys183 form a disulfide bridge. Residues His182 and Asp249 each act as charge relay system in the active site. Cystine bridges form between Cys322/Cys339 and Cys349/Cys380. Residue Ser353 is the Charge relay system of the active site.

This sequence belongs to the peptidase S1 family. CLIP subfamily. Proteolytic cleavage is necessary for activation. Cleaved and activated by CLIPB4.

It is found in the secreted. Functionally, serine protease that functions in the melanization-mediated immune response. Preferentially, cleaves substrates with an arginine at the P1 site. May be involved in the activation of the prophenoloxidase cascade upstream of CLIPB9; does not cleave prophenoloxidase. In Anopheles gambiae (African malaria mosquito), this protein is CLIP domain-containing serine protease B8.